Consider the following 481-residue polypeptide: MSENLNREPELNIGYITQVIGPVIDAVFSAGQLPKIYNALEVKSKDGTTIICEVQQLFNDNRVRAIAMSATDGLQRGVEVIDTQAPILVPVGKATLGRIFNVLGQTVDNIEIGTGEDRLPIHRPAPSFTDLETKPAIFETGIKVVDLLAPYRRGGKIGLFGGAGVGKTVLIMELINNIAKAHGGVSVFGGVGERTREGNDLYMEMKESGVINESNLSESKVALVYGQMNEPPGARMRVGLTALTMAEYFRDINRQDVLLFIDNIFRFVQAGSEVSALLGRMPSAVGYQPTLGTEMGALQERITSTTQGSITSIQAVYVPADDLTDPAPATTFAHLDATTVLSRGLAAKGIYPAVDPLDSTSTMLQPVIVGSEHYDTAQLVKKTLQRYKELQDIIAILGIDELSEEDRLVVDRARKIERFLSQPFFVAEVFTGSPGKYVDLENTIKGFNMILNGELDVYQSIAFYLVGDINEAIAKAKTITN.

161 to 168 (GGAGVGKT) is a binding site for ATP.

This sequence belongs to the ATPase alpha/beta chains family. F-type ATPases have 2 components, CF(1) - the catalytic core - and CF(0) - the membrane proton channel. CF(1) has five subunits: alpha(3), beta(3), gamma(1), delta(1), epsilon(1). CF(0) has four main subunits: a(1), b(1), b'(1) and c(9-12).

It is found in the plastid. Its subcellular location is the chloroplast thylakoid membrane. It catalyses the reaction ATP + H2O + 4 H(+)(in) = ADP + phosphate + 5 H(+)(out). Produces ATP from ADP in the presence of a proton gradient across the membrane. The catalytic sites are hosted primarily by the beta subunits. This chain is ATP synthase subunit beta, chloroplastic, found in Dictyota dichotoma.